A 280-amino-acid chain; its full sequence is uncharacterized protein (280 aa).

The 102-residue stretch at 26 to 127 (YFMSMKLLDV…TRVSILMRYY (102 aa)) folds into the KilA-N domain.

This is an uncharacterized protein from Vertebrata (FPV).